Reading from the N-terminus, the 91-residue chain is Putative regulatory protein Cphy_2880 (91 aa).

The protein belongs to the RemA family.

This chain is Putative regulatory protein Cphy_2880, found in Lachnoclostridium phytofermentans (strain ATCC 700394 / DSM 18823 / ISDg) (Clostridium phytofermentans).